A 572-amino-acid polypeptide reads, in one-letter code: Proline--tRNA ligase (572 aa).

This sequence belongs to the class-II aminoacyl-tRNA synthetase family. ProS type 1 subfamily. In terms of assembly, homodimer.

The protein localises to the cytoplasm. It carries out the reaction tRNA(Pro) + L-proline + ATP = L-prolyl-tRNA(Pro) + AMP + diphosphate. Its function is as follows. Catalyzes the attachment of proline to tRNA(Pro) in a two-step reaction: proline is first activated by ATP to form Pro-AMP and then transferred to the acceptor end of tRNA(Pro). As ProRS can inadvertently accommodate and process non-cognate amino acids such as alanine and cysteine, to avoid such errors it has two additional distinct editing activities against alanine. One activity is designated as 'pretransfer' editing and involves the tRNA(Pro)-independent hydrolysis of activated Ala-AMP. The other activity is designated 'posttransfer' editing and involves deacylation of mischarged Ala-tRNA(Pro). The misacylated Cys-tRNA(Pro) is not edited by ProRS. The protein is Proline--tRNA ligase of Yersinia pseudotuberculosis serotype IB (strain PB1/+).